A 28-amino-acid polypeptide reads, in one-letter code: Cytochrome c oxidase subunit 5B, mitochondrial (28 aa).

Belongs to the cytochrome c oxidase subunit 5B family. Component of the cytochrome c oxidase (complex IV, CIV), a multisubunit enzyme composed of a catalytic core of 3 subunits and several supernumerary subunits. The complex exists as a monomer or a dimer and forms supercomplexes (SCs) in the inner mitochondrial membrane with ubiquinol-cytochrome c oxidoreductase (cytochrome b-c1 complex, complex III, CIII).

It is found in the mitochondrion inner membrane. It participates in energy metabolism; oxidative phosphorylation. Functionally, component of the cytochrome c oxidase, the last enzyme in the mitochondrial electron transport chain which drives oxidative phosphorylation. The respiratory chain contains 3 multisubunit complexes succinate dehydrogenase (complex II, CII), ubiquinol-cytochrome c oxidoreductase (cytochrome b-c1 complex, complex III, CIII) and cytochrome c oxidase (complex IV, CIV), that cooperate to transfer electrons derived from NADH and succinate to molecular oxygen, creating an electrochemical gradient over the inner membrane that drives transmembrane transport and the ATP synthase. Cytochrome c oxidase is the component of the respiratory chain that catalyzes the reduction of oxygen to water. Electrons originating from reduced cytochrome c in the intermembrane space (IMS) are transferred via the dinuclear copper A center (CU(A)) of subunit 2 and heme A of subunit 1 to the active site in subunit 1, a binuclear center (BNC) formed by heme A3 and copper B (CU(B)). The BNC reduces molecular oxygen to 2 water molecules using 4 electrons from cytochrome c in the IMS and 4 protons from the mitochondrial matrix. The chain is Cytochrome c oxidase subunit 5B, mitochondrial from Solanum tuberosum (Potato).